The chain runs to 91 residues: Small ribosomal subunit protein uS19 (91 aa).

It belongs to the universal ribosomal protein uS19 family.

Functionally, protein S19 forms a complex with S13 that binds strongly to the 16S ribosomal RNA. This chain is Small ribosomal subunit protein uS19, found in Desulfotalea psychrophila (strain LSv54 / DSM 12343).